The sequence spans 116 residues: Putative pterin-4-alpha-carbinolamine dehydratase (116 aa).

The protein belongs to the pterin-4-alpha-carbinolamine dehydratase family.

The enzyme catalyses (4aS,6R)-4a-hydroxy-L-erythro-5,6,7,8-tetrahydrobiopterin = (6R)-L-erythro-6,7-dihydrobiopterin + H2O. The chain is Putative pterin-4-alpha-carbinolamine dehydratase from Microcystis aeruginosa (strain NIES-843 / IAM M-2473).